The sequence spans 470 residues: MNARIAELLHNYLGRPPSLSEYHMLKLQHRNIQKIIAFNKDIFISLIKKNKKKFFSDIDLTSSEIKTSVLSYFSKQRDTYSIGKLYTIIELQTILVSTYTDVLGVLTLKGPDMFPSSTRYDIKSIKQIATSALHAMNVAVLSDKVMGRHNVSPLVSNVNALMEEYLRRHNKNCICYGSYSLHLLNPEVKYGDIDILQTNSRTFLIDLAFLIKFITGSNVILLKVPYLKNYMVLKDKDDNHIIDSFNIRQETMQVIPKVLIDNIYIVDPALQLMSMFKMFSQIDRLEDLARNPEKLTVRLATLMEYVRVKYGVILNGESNHMPMKGVLDKDKRIIVMDTSGYNFSFKKCFVYMDESSLSSDILDLNADDAVDFENVSNSAYLVKGDVLYTYFSNTILLSDPDTIHEISNKAMSAHILIYQILTGNDIRQPLSDLVNSLMYNEKVLIHEVIPRDKKTGKHGIIDIEKDIITH.

Residues aspartate 192 and aspartate 194 contribute to the active site.

This sequence belongs to the poxviridae poly(A) polymerase catalytic subunit family. Heterodimer of a large (catalytic) subunit and a small (regulatory) subunit.

It carries out the reaction RNA(n) + ATP = RNA(n)-3'-adenine ribonucleotide + diphosphate. Polymerase that creates the 3'-poly(A) tail of mRNA's. The chain is Poly(A) polymerase catalytic subunit (PAPL) from Myxoma virus (strain Lausanne) (MYXV).